The chain runs to 419 residues: Glucose-1-phosphate adenylyltransferase (419 aa).

Residues tyrosine 107, glycine 172, 187–188 (EK), and serine 205 contribute to the alpha-D-glucose 1-phosphate site.

The protein belongs to the bacterial/plant glucose-1-phosphate adenylyltransferase family. Homotetramer.

The enzyme catalyses alpha-D-glucose 1-phosphate + ATP + H(+) = ADP-alpha-D-glucose + diphosphate. It functions in the pathway glycan biosynthesis; glycogen biosynthesis. Its function is as follows. Involved in the biosynthesis of ADP-glucose, a building block required for the elongation reactions to produce glycogen. Catalyzes the reaction between ATP and alpha-D-glucose 1-phosphate (G1P) to produce pyrophosphate and ADP-Glc. This is Glucose-1-phosphate adenylyltransferase from Novosphingobium aromaticivorans (strain ATCC 700278 / DSM 12444 / CCUG 56034 / CIP 105152 / NBRC 16084 / F199).